Here is a 250-residue protein sequence, read N- to C-terminus: AA9 family lytic polysaccharide monooxygenase F (250 aa).

Positions 1-18 (MHLKTFSNLLVFVATVAA) are cleaved as a signal peptide. His-19 serves as a coordination point for Cu(2+). N-linked (GlcNAc...) asparagine glycosylation is found at Asn-24 and Asn-85. 2 disulfides stabilise this stretch: Cys-70–Cys-199 and Cys-169–Cys-250. Residue His-108 participates in Cu(2+) binding. The N-linked (GlcNAc...) asparagine glycan is linked to Asn-146. Residues His-185 and Gln-194 each contribute to the O2 site. Tyr-196 provides a ligand contact to Cu(2+).

It belongs to the polysaccharide monooxygenase AA9 family. Cu(2+) serves as cofactor.

The protein localises to the secreted. It catalyses the reaction [(1-&gt;4)-beta-D-glucosyl]n+m + reduced acceptor + O2 = 4-dehydro-beta-D-glucosyl-[(1-&gt;4)-beta-D-glucosyl]n-1 + [(1-&gt;4)-beta-D-glucosyl]m + acceptor + H2O.. Functionally, lytic polysaccharide monooxygenase (LPMO) that depolymerizes crystalline and amorphous polysaccharides via the oxidation of scissile alpha- or beta-(1-4)-glycosidic bonds, yielding C1 and C4 oxidation products. Catalysis by LPMOs requires the reduction of the active-site copper from Cu(II) to Cu(I) by a reducing agent and H(2)O(2) or O(2) as a cosubstrate. The protein is AA9 family lytic polysaccharide monooxygenase F of Botryotinia fuckeliana (strain B05.10) (Noble rot fungus).